The following is a 482-amino-acid chain: tRNA sulfurtransferase (482 aa).

The region spanning 61–165 (KETLEVLTQT…NDKLNQVIER (105 aa)) is the THUMP domain. ATP is bound by residues 183 to 184 (LI), lysine 265, glycine 287, and glutamine 296. Cysteine 344 and cysteine 456 form a disulfide bridge. One can recognise a Rhodanese domain in the interval 404 to 482 (VAEHAVVLDI…GFHNVKVYRP (79 aa)). Catalysis depends on cysteine 456, which acts as the Cysteine persulfide intermediate.

Belongs to the ThiI family.

It localises to the cytoplasm. The catalysed reaction is [ThiI sulfur-carrier protein]-S-sulfanyl-L-cysteine + a uridine in tRNA + 2 reduced [2Fe-2S]-[ferredoxin] + ATP + H(+) = [ThiI sulfur-carrier protein]-L-cysteine + a 4-thiouridine in tRNA + 2 oxidized [2Fe-2S]-[ferredoxin] + AMP + diphosphate. The enzyme catalyses [ThiS sulfur-carrier protein]-C-terminal Gly-Gly-AMP + S-sulfanyl-L-cysteinyl-[cysteine desulfurase] + AH2 = [ThiS sulfur-carrier protein]-C-terminal-Gly-aminoethanethioate + L-cysteinyl-[cysteine desulfurase] + A + AMP + 2 H(+). Its pathway is cofactor biosynthesis; thiamine diphosphate biosynthesis. Functionally, catalyzes the ATP-dependent transfer of a sulfur to tRNA to produce 4-thiouridine in position 8 of tRNAs, which functions as a near-UV photosensor. Also catalyzes the transfer of sulfur to the sulfur carrier protein ThiS, forming ThiS-thiocarboxylate. This is a step in the synthesis of thiazole, in the thiamine biosynthesis pathway. The sulfur is donated as persulfide by IscS. The chain is tRNA sulfurtransferase from Vibrio atlanticus (strain LGP32) (Vibrio splendidus (strain Mel32)).